A 459-amino-acid polypeptide reads, in one-letter code: Argininosuccinate lyase (459 aa).

It belongs to the lyase 1 family. Argininosuccinate lyase subfamily.

Its subcellular location is the cytoplasm. It carries out the reaction 2-(N(omega)-L-arginino)succinate = fumarate + L-arginine. It participates in amino-acid biosynthesis; L-arginine biosynthesis; L-arginine from L-ornithine and carbamoyl phosphate: step 3/3. This chain is Argininosuccinate lyase, found in Staphylococcus aureus (strain bovine RF122 / ET3-1).